The following is a 255-amino-acid chain: Large ribosomal subunit protein uL2 (255 aa).

The interval 211–235 (PHGGGNHQHVGHATTTKRDDPAGKK) is disordered.

Belongs to the universal ribosomal protein uL2 family.

In Dictyostelium discoideum (Social amoeba), this protein is Large ribosomal subunit protein uL2 (rpl8).